Reading from the N-terminus, the 729-residue chain is MLYKGDTLYLDWLEDGIAELVFDAPGSVNKLDTATVASLGEAIGVLEQQSDLKGLLLRSNKAAFIVGADITEFLSLFLVPEEQLSQWLHFANSVFNRLEDLPVPTIAAANGYALGGGCECVLATDYRLATPDLRIGLPETKLGIMPGFGGSVRMPRMLGADSALEIIAAGKDVGADQALKIGLVDGVVKAEKLVEGAKAVLRQAINGDLDWKAKRQPKLEPLKLSKIEATMSFTIAKGMVAQTAGKHYPAPITAVKTIEAAARFGREEALNLENKSFVPLAHTNEARALVGIFLNDQYVKGKAKKLTKDVETPKQAAVLGAGIMGGGIAYQSAWKGVPVVMKDINDKSLTLGMTEAAKLLNKQLERGKIDGLKLAGVISTIHPTLDYAGFDRVDVVVEAVVENPKVKKAVLAETEQKVRPDTVLASNTSTIPISELANALERPENFCGMHFFNPVHRMPLVEIIRGEKSSDETIAKVVAWASKMGKTPIVVNDCPGFFVNRVLFPYFAGFSQLLRDGADFRKIDKVMEKQFGWPMGPAYLLDVVGIDTAHHAQAVMAAGFPQRMQKDYRDAIDALFDANRFGQKNGLGFWRYKEDSKGKPKKEEDAAVEDLLAEVSQPKRDFSEEEIIARMMIPMVNEVVRCLEEGIIATPAEADMALVYGLGFPPFHGGAFRWLDTLGSAKYLDMAQQYQHLGPLYEVPEGLRNKARHNEPYYPPVEPARLVGDLKTA.

The tract at residues 1–189 (MLYKGDTLYL…KIGLVDGVVK (189 aa)) is enoyl-CoA hydratase/isomerase. Aspartate 296 serves as a coordination point for substrate. The tract at residues 311–729 (ETPKQAAVLG…ARLVGDLKTA (419 aa)) is 3-hydroxyacyl-CoA dehydrogenase. NAD(+) contacts are provided by residues methionine 324, aspartate 343, 400–402 (VVE), lysine 407, and serine 429. The For 3-hydroxyacyl-CoA dehydrogenase activity role is filled by histidine 450. Asparagine 453 is a binding site for NAD(+). Asparagine 500 and tyrosine 660 together coordinate substrate.

It in the N-terminal section; belongs to the enoyl-CoA hydratase/isomerase family. The protein in the C-terminal section; belongs to the 3-hydroxyacyl-CoA dehydrogenase family. As to quaternary structure, heterotetramer of two alpha chains (FadB) and two beta chains (FadA).

It catalyses the reaction a (3S)-3-hydroxyacyl-CoA + NAD(+) = a 3-oxoacyl-CoA + NADH + H(+). It carries out the reaction a (3S)-3-hydroxyacyl-CoA = a (2E)-enoyl-CoA + H2O. The catalysed reaction is a 4-saturated-(3S)-3-hydroxyacyl-CoA = a (3E)-enoyl-CoA + H2O. The enzyme catalyses (3S)-3-hydroxybutanoyl-CoA = (3R)-3-hydroxybutanoyl-CoA. It catalyses the reaction a (3Z)-enoyl-CoA = a 4-saturated (2E)-enoyl-CoA. It carries out the reaction a (3E)-enoyl-CoA = a 4-saturated (2E)-enoyl-CoA. It functions in the pathway lipid metabolism; fatty acid beta-oxidation. In terms of biological role, involved in the aerobic and anaerobic degradation of long-chain fatty acids via beta-oxidation cycle. Catalyzes the formation of 3-oxoacyl-CoA from enoyl-CoA via L-3-hydroxyacyl-CoA. It can also use D-3-hydroxyacyl-CoA and cis-3-enoyl-CoA as substrate. The polypeptide is Fatty acid oxidation complex subunit alpha (Escherichia coli (strain SE11)).